Reading from the N-terminus, the 143-residue chain is Large ribosomal subunit protein uL15 (143 aa).

The disordered stretch occupies residues 1 to 51 (MELNGIKPAAGAKHAKRRVGRGIGSGIGKTAGRGHKGQKSRAGGFHKVGFE). The segment covering 21–31 (RGIGSGIGKTA) has biased composition (gly residues).

This sequence belongs to the universal ribosomal protein uL15 family. Part of the 50S ribosomal subunit.

In terms of biological role, binds to the 23S rRNA. The chain is Large ribosomal subunit protein uL15 from Variovorax paradoxus (strain S110).